Reading from the N-terminus, the 310-residue chain is Ribosomal protein uL3 glutamine methyltransferase (310 aa).

Belongs to the protein N5-glutamine methyltransferase family. PrmB subfamily.

It catalyses the reaction L-glutaminyl-[ribosomal protein uL3] + S-adenosyl-L-methionine = N(5)-methyl-L-glutaminyl-[ribosomal protein uL3] + S-adenosyl-L-homocysteine + H(+). In terms of biological role, methylates large ribosomal subunit protein uL3 on a specific glutamine residue. This Yersinia pestis protein is Ribosomal protein uL3 glutamine methyltransferase.